We begin with the raw amino-acid sequence, 276 residues long: Proteasome subunit beta type-8 (276 aa).

The propeptide at 1-72 (MALLDLCGAP…RKVQIEMAHG (72 aa)) is removed in mature form. Threonine 73 acts as the Nucleophile in catalysis.

The protein belongs to the peptidase T1B family. The 26S proteasome consists of a 20S proteasome core and two 19S regulatory subunits. The 20S proteasome core is composed of 28 subunits that are arranged in four stacked rings, resulting in a barrel-shaped structure. The two end rings are each formed by seven alpha subunits, and the two central rings are each formed by seven beta subunits. The catalytic chamber with the active sites is on the inside of the barrel. Component of the immunoproteasome, where it displaces the equivalent housekeeping subunit PSMB5. Component of the spermatoproteasome, a form of the proteasome specifically found in testis. Directly interacts with POMP. Interacts with TAP1. Post-translationally, autocleaved. The resulting N-terminal Thr residue of the mature subunit is responsible for the nucleophile proteolytic activity.

The protein localises to the cytoplasm. Its subcellular location is the nucleus. It catalyses the reaction Cleavage of peptide bonds with very broad specificity.. In terms of biological role, the proteasome is a multicatalytic proteinase complex which is characterized by its ability to cleave peptides with Arg, Phe, Tyr, Leu, and Glu adjacent to the leaving group at neutral or slightly basic pH. The proteasome has an ATP-dependent proteolytic activity. This subunit is involved in antigen processing to generate class I binding peptides. May participate in the generation of spliced peptides resulting from the ligation of two separate proteasomal cleavage products that are not contiguous in the parental protein. Required for adipocyte differentiation. The sequence is that of Proteasome subunit beta type-8 (Psmb8) from Rattus norvegicus (Rat).